A 493-amino-acid chain; its full sequence is Cytochrome P450 2E1 (493 aa).

Residue 298 to 303 (FAGTET) participates in substrate binding. C437 contacts heme.

The protein belongs to the cytochrome P450 family. Interacts with chaperones HSP70 and HSP90; this interaction is required for initial targeting to mitochondria. Heme is required as a cofactor.

The protein localises to the endoplasmic reticulum membrane. The protein resides in the microsome membrane. Its subcellular location is the mitochondrion inner membrane. It catalyses the reaction an organic molecule + reduced [NADPH--hemoprotein reductase] + O2 = an alcohol + oxidized [NADPH--hemoprotein reductase] + H2O + H(+). It carries out the reaction (5Z,8Z,11Z)-eicosatrienoate + reduced [NADPH--hemoprotein reductase] + O2 = 19-hydroxy-(5Z,8Z,11Z)-eicosatrienoate + oxidized [NADPH--hemoprotein reductase] + H2O + H(+). The catalysed reaction is (5Z,8Z,11Z,14Z,17Z)-eicosapentaenoate + reduced [NADPH--hemoprotein reductase] + O2 = 19-hydroxy-(5Z,8Z,11Z,14Z,17Z)-eicosapentaenoate + oxidized [NADPH--hemoprotein reductase] + H2O + H(+). The enzyme catalyses (4Z,7Z,10Z,13Z,16Z,19Z)-docosahexaenoate + reduced [NADPH--hemoprotein reductase] + O2 = 21-hydroxy-(4Z,7Z,10Z,13Z,16Z,19Z)-docosahexaenoate + oxidized [NADPH--hemoprotein reductase] + H2O + H(+). It catalyses the reaction dodecanoate + reduced [NADPH--hemoprotein reductase] + O2 = 11-hydroxydodecanoate + oxidized [NADPH--hemoprotein reductase] + H2O + H(+). It carries out the reaction tetradecanoate + reduced [NADPH--hemoprotein reductase] + O2 = 13-hydroxytetradecanoate + oxidized [NADPH--hemoprotein reductase] + H2O + H(+). The catalysed reaction is 4-nitrophenol + NADPH + O2 + H(+) = 4-nitrocatechol + NADP(+) + H2O. Its pathway is lipid metabolism; fatty acid metabolism. With respect to regulation, the omega-1 hydroxylase activity is stimulated by cytochrome b5. Functionally, a cytochrome P450 monooxygenase involved in the metabolism of fatty acids. Mechanistically, uses molecular oxygen inserting one oxygen atom into a substrate, and reducing the second into a water molecule, with two electrons provided by NADPH via cytochrome P450 reductase (NADPH--hemoprotein reductase). Catalyzes the hydroxylation of carbon-hydrogen bonds. Hydroxylates fatty acids specifically at the omega-1 position displaying the highest catalytic activity for saturated fatty acids. May be involved in the oxidative metabolism of xenobiotics. The sequence is that of Cytochrome P450 2E1 from Rattus norvegicus (Rat).